A 131-amino-acid chain; its full sequence is Protein Turandot M (131 aa).

The signal sequence occupies residues 1–23 (MNPAIYLSCLVVFSLLLLGKVNA).

It belongs to the Turandot family.

Its subcellular location is the secreted. Functionally, a humoral factor that may play a role in stress tolerance. Requires Mekk1 expression in the fat body to regulate response to septic injury and consequent immune response. The polypeptide is Protein Turandot M (Drosophila erecta (Fruit fly)).